We begin with the raw amino-acid sequence, 108 residues long: T-cell acute lymphocytic leukemia protein 2 (108 aa).

The region spanning 2-54 (TRKIFTNTRERWRQQNVNSAFAKLRKLIPTHPPDKKLSKNETLRLAMRYINFL) is the bHLH domain. The disordered stretch occupies residues 89–108 (DRTLLENYQVPSPGPSHHIP).

In Homo sapiens (Human), this protein is T-cell acute lymphocytic leukemia protein 2 (TAL2).